The sequence spans 511 residues: Bifunctional purine biosynthesis protein PurH (511 aa).

The 146-residue stretch at 1–146 (MGRLALISVT…KNFAHLTVIS (146 aa)) folds into the MGS-like domain.

Belongs to the PurH family.

The enzyme catalyses (6R)-10-formyltetrahydrofolate + 5-amino-1-(5-phospho-beta-D-ribosyl)imidazole-4-carboxamide = 5-formamido-1-(5-phospho-D-ribosyl)imidazole-4-carboxamide + (6S)-5,6,7,8-tetrahydrofolate. It carries out the reaction IMP + H2O = 5-formamido-1-(5-phospho-D-ribosyl)imidazole-4-carboxamide. It functions in the pathway purine metabolism; IMP biosynthesis via de novo pathway; 5-formamido-1-(5-phospho-D-ribosyl)imidazole-4-carboxamide from 5-amino-1-(5-phospho-D-ribosyl)imidazole-4-carboxamide (10-formyl THF route): step 1/1. The protein operates within purine metabolism; IMP biosynthesis via de novo pathway; IMP from 5-formamido-1-(5-phospho-D-ribosyl)imidazole-4-carboxamide: step 1/1. The chain is Bifunctional purine biosynthesis protein PurH from Microcystis aeruginosa (strain NIES-843 / IAM M-2473).